The chain runs to 2235 residues: Mediator of RNA polymerase II transcription subunit 12 (2235 aa).

A compositionally biased stretch (low complexity) spans 16–35 (SAIGGASARDSGRADSSSIG). Disordered stretches follow at residues 16 to 80 (SAIG…EENL), 268 to 293 (FPAQ…SPAS), 835 to 858 (SVKR…GCED), 1900 to 1959 (SSVT…SPAA), 2134 to 2160 (GSTA…AQGK), and 2183 to 2202 (WTLL…ASNS). A compositionally biased stretch (polar residues) spans 280 to 293 (MLYTGSMQKNSPAS). Over residues 1900 to 1916 (SSVTNRSTTSNKQMGTA) the composition is skewed to polar residues. The span at 1917–1927 (SSGSEISSNKG) shows a compositional bias: low complexity. A compositionally biased stretch (polar residues) spans 2134–2155 (GSTAAAGTNQRNSPAISKSGTA). A compositionally biased stretch (low complexity) spans 2191–2202 (SSGLSSSNASNS).

It belongs to the Mediator complex subunit 12 family. In terms of assembly, component of the Mediator complex. Ubiquitous. Higher expression in vascular tissue, shoot apex and developing floral organs.

The protein localises to the nucleus. In terms of biological role, component of the Mediator complex, a coactivator involved in the regulated transcription of nearly all RNA polymerase II-dependent genes. Mediator functions as a bridge to convey information from gene-specific regulatory proteins to the basal RNA polymerase II transcription machinery. The Mediator complex, having a compact conformation in its free form, is recruited to promoters by direct interactions with regulatory proteins and serves for the assembly of a functional preinitiation complex with RNA polymerase II and the general transcription factors. Flowering regulator which suppresses FLC expression, promotes FT and TSF expression and up-regulates SOC1 and FUL mainly in an FT-dependent manner under long-day conditions. Involved in diverse developmental aspects through gene regulation and modulation of the auxin response. Acts closely together with MAB13. Involved in the regulation of embryo patterning and cotyledon organogenesis by transiently repressing a transcriptional program that interferes with this process. This Arabidopsis thaliana (Mouse-ear cress) protein is Mediator of RNA polymerase II transcription subunit 12 (MED12).